The primary structure comprises 252 residues: Imidazole glycerol phosphate synthase subunit HisF (252 aa).

Catalysis depends on residues aspartate 11 and aspartate 130.

The protein belongs to the HisA/HisF family. Heterodimer of HisH and HisF.

Its subcellular location is the cytoplasm. It catalyses the reaction 5-[(5-phospho-1-deoxy-D-ribulos-1-ylimino)methylamino]-1-(5-phospho-beta-D-ribosyl)imidazole-4-carboxamide + L-glutamine = D-erythro-1-(imidazol-4-yl)glycerol 3-phosphate + 5-amino-1-(5-phospho-beta-D-ribosyl)imidazole-4-carboxamide + L-glutamate + H(+). The protein operates within amino-acid biosynthesis; L-histidine biosynthesis; L-histidine from 5-phospho-alpha-D-ribose 1-diphosphate: step 5/9. IGPS catalyzes the conversion of PRFAR and glutamine to IGP, AICAR and glutamate. The HisF subunit catalyzes the cyclization activity that produces IGP and AICAR from PRFAR using the ammonia provided by the HisH subunit. In Desulforamulus reducens (strain ATCC BAA-1160 / DSM 100696 / MI-1) (Desulfotomaculum reducens), this protein is Imidazole glycerol phosphate synthase subunit HisF.